Consider the following 295-residue polypeptide: Beta-lactamase-like protein 2 homolog (295 aa).

H79, H81, D83, H84, H141, D160, and H195 together coordinate Zn(2+).

This sequence belongs to the metallo-beta-lactamase superfamily. Glyoxalase II family.

The protein is Beta-lactamase-like protein 2 homolog of Caenorhabditis elegans.